Reading from the N-terminus, the 318-residue chain is MNVDLESLAEATSGAIGSLISTTILYPLDTCKTKYQAEARSSGRTKYRNLTDVLLEAISNRQVLSLYQGLGTKNLQSFISQFVYFYGYSYFKRLYLEKSGYKSIGTKANLVIAAAAGACTAIATQPLDTASSRMQTSEFGKSKGLLKTLTEGNWSDAFDGLSISLLLTSNPAIQYTVFDQLKQRALKNKQDNADKGTSPASLSAFMAFLLGAISKSIATCLTYPAIRCKVIIQAADSAEETSKTKIKSQKTVLSVLYGIWKREGILGYFKGLHAQILKTVLSSALLLMIKEKISASTWVLILALKRYLLLPRGKVKNL.

Solcar repeat units lie at residues 5–94 (LESL…FKRL), 104–184 (IGTK…LKQR), and 202–296 (LSAF…ISAS). Helical transmembrane passes span 8–28 (LAEA…LYPL), 104–124 (IGTK…AIAT), 158–178 (FDGL…YTVF), 201–221 (SLSA…ATCL), 252–272 (VLSV…FKGL), and 284–304 (ALLL…ILAL).

This sequence belongs to the mitochondrial carrier (TC 2.A.29) family.

The protein localises to the peroxisome membrane. Its function is as follows. Peroxisomal adenine nucleotide transporter catalyzing the counterexchange of ATP with AMP. ATP is needed by reactions that generate acyl-CoA for peroxisomal fatty acid beta-oxidation during postgerminative growth. Required for the conversion of seed-reserved triacylglycerols into sucrose that is necessary for growth before the onset of photosynthesis. In Glycine max (Soybean), this protein is Peroxisomal adenine nucleotide carrier 1 (PNC1).